Consider the following 476-residue polypeptide: Hydrogenase-4 component F homolog (476 aa).

12 helical membrane passes run 1-21 (MSAA…SQIS), 25-45 (ISSW…LFLL), 54-74 (FFLV…IGFT), 120-140 (IGLM…MVGI), 153-173 (YFIL…LFYI), 202-222 (LVNI…GLFP), 235-255 (PTPI…YAIL), 270-290 (AGPL…LMFY), 307-327 (MGII…AGLL), 368-388 (LGWG…MGVF), 402-422 (SPLL…ALIL), and 442-462 (LYLP…YIPP).

It belongs to the complex I subunit 5 family.

Its subcellular location is the cell inner membrane. The chain is Hydrogenase-4 component F homolog (hyfF) from Methylacidiphilum infernorum (isolate V4) (Methylokorus infernorum (strain V4)).